Here is a 361-residue protein sequence, read N- to C-terminus: Molybdopterin synthase catalytic subunit (361 aa).

Residues 101-102, Lys117, and 124-126 each bind substrate; these read HR and KKE.

Belongs to the MoaE family. MOCS2B subfamily. Heterotetramer; composed of 2 small (Mocs2A) and 2 large (Mocs2B) subunits.

It localises to the cytoplasm. The enzyme catalyses 2 [molybdopterin-synthase sulfur-carrier protein]-C-terminal-Gly-aminoethanethioate + cyclic pyranopterin phosphate + H2O = molybdopterin + 2 [molybdopterin-synthase sulfur-carrier protein]-C-terminal Gly-Gly + 2 H(+). It functions in the pathway cofactor biosynthesis; molybdopterin biosynthesis. Catalytic subunit of the molybdopterin synthase complex, a complex that catalyzes the conversion of precursor Z into molybdopterin. Acts by mediating the incorporation of 2 sulfur atoms from thiocarboxylated Mocs2A into precursor Z to generate a dithiolene group. This is Molybdopterin synthase catalytic subunit from Drosophila persimilis (Fruit fly).